We begin with the raw amino-acid sequence, 309 residues long: Large ribosomal subunit protein mL45 (309 aa).

This sequence belongs to the mitochondrion-specific ribosomal protein mL45 family. In terms of assembly, component of the mitochondrial ribosome large subunit (39S) which comprises a 16S rRNA and about 50 distinct proteins.

The protein localises to the mitochondrion. Component of the mitochondrial large ribosomal subunit (mt-LSU). Within the mitochondrial ribosomes, required to direct the nascent polypeptide toward the tunnel exit and position the exit at a distance from the membrane surface. The sequence is that of Large ribosomal subunit protein mL45 (mrpl45) from Xenopus tropicalis (Western clawed frog).